We begin with the raw amino-acid sequence, 188 residues long: GMP synthase [glutamine-hydrolyzing] subunit A (188 aa).

Residues 1 to 188 (MIVIMDNGGQ…RNFAELCGEL (188 aa)) form the Glutamine amidotransferase type-1 domain. The active-site Nucleophile is the Cys78. Residues His165 and Glu167 contribute to the active site.

In terms of assembly, heterodimer composed of a glutamine amidotransferase subunit (A) and a GMP-binding subunit (B).

The enzyme catalyses XMP + L-glutamine + ATP + H2O = GMP + L-glutamate + AMP + diphosphate + 2 H(+). The protein operates within purine metabolism; GMP biosynthesis; GMP from XMP (L-Gln route): step 1/1. In terms of biological role, catalyzes the synthesis of GMP from XMP. This chain is GMP synthase [glutamine-hydrolyzing] subunit A, found in Thermococcus kodakarensis (strain ATCC BAA-918 / JCM 12380 / KOD1) (Pyrococcus kodakaraensis (strain KOD1)).